Consider the following 320-residue polypeptide: Ubiquinone biosynthesis protein COQ4, mitochondrial (320 aa).

Residues 1 to 31 (MFARSALGRSDQLVTALNSQKRQFVLTAATT) constitute a mitochondrion transit peptide. Residues H205, D206, H209, and E221 each coordinate Zn(2+).

This sequence belongs to the COQ4 family. In terms of assembly, component of a multi-subunit COQ enzyme complex, composed of at least COQ3, COQ4, COQ5, COQ6, COQ7 and COQ9. Zn(2+) serves as cofactor.

The protein resides in the mitochondrion inner membrane. It catalyses the reaction a 4-hydroxy-3-methoxy-5-(all-trans-polyprenyl)benzoate + H(+) = a 2-methoxy-6-(all-trans-polyprenyl)phenol + CO2. The protein operates within cofactor biosynthesis; ubiquinone biosynthesis. Lyase that catalyzes the C1-decarboxylation of 4-hydroxy-3-methoxy-5-(all-trans-polyprenyl)benzoic acid into 2-methoxy-6-(all-trans-polyprenyl)phenol during ubiquinone biosynthesis. This is Ubiquinone biosynthesis protein COQ4, mitochondrial from Scheffersomyces stipitis (strain ATCC 58785 / CBS 6054 / NBRC 10063 / NRRL Y-11545) (Yeast).